We begin with the raw amino-acid sequence, 197 residues long: Molybdenum cofactor guanylyltransferase (197 aa).

Residues 10 to 12 (LAG), Lys23, Asp69, and Asp99 contribute to the GTP site. Mg(2+) is bound at residue Asp99.

The protein belongs to the MobA family. In terms of assembly, monomer. It depends on Mg(2+) as a cofactor.

The protein localises to the cytoplasm. The enzyme catalyses Mo-molybdopterin + GTP + H(+) = Mo-molybdopterin guanine dinucleotide + diphosphate. Transfers a GMP moiety from GTP to Mo-molybdopterin (Mo-MPT) cofactor (Moco or molybdenum cofactor) to form Mo-molybdopterin guanine dinucleotide (Mo-MGD) cofactor. The polypeptide is Molybdenum cofactor guanylyltransferase (Serratia proteamaculans (strain 568)).